A 79-amino-acid polypeptide reads, in one-letter code: U-myrmeciitoxin(01)-Mg9a (79 aa).

The N-terminal stretch at 1-21 is a signal peptide; the sequence is MKLSCLLLTLAIIFVLTIVHA. The propeptide occupies 22-48; the sequence is PNVEAKALANPESDAIGFADAVGEADP. A Glutamine amide modification is found at glutamine 78.

In terms of tissue distribution, expressed by the venom gland.

The protein localises to the secreted. Functionally, may have antimicrobial properties, like most ant linear peptides. The chain is U-myrmeciitoxin(01)-Mg9a from Myrmecia gulosa (Red bulldog ant).